Consider the following 38-residue polypeptide: Antimicrobial peptide 1 (38 aa).

Disulfide bonds. Expressed in flowers but not in leaves, seeds or roots (at protein level).

In terms of biological role, antimicrobial peptide. Active against fungal species B.cinerea (IC(50)=5.8 uM) and A.niger (IC(50)=5.6 uM) but not against F.oxysporum, F.graminearum, B.sorokinina and P.debaryanum at concentrations below 10 uM. Active against bacterial species P.syringae, B.subtilis and X.campestris. The sequence is that of Antimicrobial peptide 1 from Taraxacum officinale (Common dandelion).